The sequence spans 135 residues: Transcription antitermination protein NusB (135 aa).

Residues 115-135 (ATPAESTGRGSAVDSIPGQPS) form a disordered region.

It belongs to the NusB family.

Involved in transcription antitermination. Required for transcription of ribosomal RNA (rRNA) genes. Binds specifically to the boxA antiterminator sequence of the ribosomal RNA (rrn) operons. This Frankia casuarinae (strain DSM 45818 / CECT 9043 / HFP020203 / CcI3) protein is Transcription antitermination protein NusB.